We begin with the raw amino-acid sequence, 470 residues long: Nuclear segregation protein BFR1 (470 aa).

Coiled coils occupy residues Asp-17–Asn-178 and Asn-237–Lys-281. Ser-260 bears the Phosphoserine mark. Thr-336 carries the post-translational modification Phosphothreonine. Residues Ala-346–Ala-368 are disordered. Positions Lys-349–Gln-358 are enriched in basic residues. Ser-369 carries the phosphoserine modification. The stretch at Asn-398–Glu-469 forms a coiled coil. The segment at Gln-447–Asn-470 is disordered.

In terms of biological role, implicated in secretion, nuclear segregation and in maintenance of cell size. This is Nuclear segregation protein BFR1 (BFR1) from Saccharomyces cerevisiae (strain ATCC 204508 / S288c) (Baker's yeast).